The following is a 462-amino-acid chain: Glycoprotein endo-alpha-1,2-mannosidase (462 aa).

The Cytoplasmic segment spans residues 1-8; it reads MAKFRRRT. The helical; Signal-anchor for type II membrane protein transmembrane segment at 9 to 29 threads the bilayer; that stretch reads CIILALFILFIFSLMMGLKML. The Lumenal portion of the chain corresponds to 30–462; that stretch reads RPNTATFGAP…YALDRQLPVS (433 aa). The catalytic stretch occupies residues 60-462; sequence DFQKSDRINS…YALDRQLPVS (403 aa).

It belongs to the glycosyl hydrolase 99 family. Undergoes proteolytic cleavage in the C-terminal region. In terms of tissue distribution, highly expressed in the liver and kidney. Expressed at lower levels in muscle, pancreas, heart, placenta, lung and brain.

The protein localises to the golgi apparatus membrane. The catalysed reaction is N-{alpha-Glc-(1-&gt;3)-alpha-Man-(1-&gt;2)-alpha-Man-(1-&gt;2)-alpha-Man-(1-&gt;3)-[alpha-Man-(1-&gt;2)-alpha-Man-(1-&gt;3)-[alpha-Man-(1-&gt;2)-alpha-Man-(1-&gt;6)]-alpha-Man-(1-&gt;6)]-beta-Man-(1-&gt;4)-beta-GlcNAc-(1-&gt;4)-beta-GlcNAc}-L-asparaginyl-[protein] + H2O = alpha-D-glucosyl-(1-&gt;3)-D-mannopyranose + N(4)-{alpha-D-Man-(1-&gt;2)-alpha-D-Man-(1-&gt;3)-[alpha-D-Man-(1-&gt;2)-alpha-D-Man-(1-&gt;3)-[alpha-D-Man-(1-&gt;2)-alpha-D-Man-(1-&gt;6)]-alpha-D-Man-(1-&gt;6)]-beta-D-Man-(1-&gt;4)-beta-D-GlaNAc-(1-&gt;4)-beta-D-GlcNAc}-L-asparaginyl-[protein] (N-glucan mannose isomer 8A1,2,3B1,2). In Homo sapiens (Human), this protein is Glycoprotein endo-alpha-1,2-mannosidase (MANEA).